The sequence spans 238 residues: Tyrosine recombinase XerD-like (238 aa).

One can recognise a Core-binding (CB) domain in the interval 1-75 (MKLPNEIDEY…SANQYLLFLY (75 aa)). One can recognise a Tyr recombinase domain in the interval 90–238 (VQKKSQTAQS…TITTLEKYYR (149 aa)). Residues K154 and R204 contribute to the active site. Y236 serves as the catalytic O-(3'-phospho-DNA)-tyrosine intermediate.

It belongs to the 'phage' integrase family. XerD-like subfamily.

The protein resides in the cytoplasm. In terms of biological role, putative tyrosine recombinase. Not involved in the cutting and rejoining of the recombining DNA molecules on dif(SL) site. The chain is Tyrosine recombinase XerD-like (ynbA) from Lactococcus lactis subsp. lactis (strain IL1403) (Streptococcus lactis).